Consider the following 204-residue polypeptide: Large ribosomal subunit protein bL25 (204 aa).

The protein belongs to the bacterial ribosomal protein bL25 family. CTC subfamily. As to quaternary structure, part of the 50S ribosomal subunit; part of the 5S rRNA/L5/L18/L25 subcomplex. Contacts the 5S rRNA. Binds to the 5S rRNA independently of L5 and L18.

Functionally, this is one of the proteins that binds to the 5S RNA in the ribosome where it forms part of the central protuberance. This Pseudomonas syringae pv. syringae (strain B728a) protein is Large ribosomal subunit protein bL25.